The sequence spans 324 residues: [Acyl-carrier-protein] phosphodiesterase PptH (324 aa).

Mn(2+) is bound by residues D22, H24, and D51. The Fe cation site is built by D51, N79, H205, and H246. H248 serves as a coordination point for Mn(2+).

This sequence belongs to the metallophosphoesterase superfamily. Fe(3+) serves as cofactor. It depends on Mn(2+) as a cofactor.

It catalyses the reaction holo-[ACP] + H2O = apo-[ACP] + (R)-4'-phosphopantetheine + H(+). Its function is as follows. Catalyzes the hydrolysis of the phosphopantetheine group from substrate holo-carrier proteins. The polypeptide is [Acyl-carrier-protein] phosphodiesterase PptH (Mycobacterium tuberculosis (strain ATCC 25618 / H37Rv)).